We begin with the raw amino-acid sequence, 324 residues long: Rho crystallin (324 aa).

Position 2 is an N-acetylthreonine (Thr2). Ser218–Asn281 is a binding site for NADP(+).

The protein belongs to the aldo/keto reductase family. Monomer.

This Rana temporaria (European common frog) protein is Rho crystallin.